The following is a 203-amino-acid chain: Peptidyl-tRNA hydrolase (203 aa).

Y18 lines the tRNA pocket. The active-site Proton acceptor is the H23. Positions 69, 71, and 117 each coordinate tRNA.

This sequence belongs to the PTH family. Monomer.

It is found in the cytoplasm. It catalyses the reaction an N-acyl-L-alpha-aminoacyl-tRNA + H2O = an N-acyl-L-amino acid + a tRNA + H(+). Its function is as follows. Hydrolyzes ribosome-free peptidyl-tRNAs (with 1 or more amino acids incorporated), which drop off the ribosome during protein synthesis, or as a result of ribosome stalling. Catalyzes the release of premature peptidyl moieties from peptidyl-tRNA molecules trapped in stalled 50S ribosomal subunits, and thus maintains levels of free tRNAs and 50S ribosomes. The chain is Peptidyl-tRNA hydrolase from Parasynechococcus marenigrum (strain WH8102).